The following is a 146-amino-acid chain: UPF0260 protein Spea_2441 (146 aa).

Belongs to the UPF0260 family.

The polypeptide is UPF0260 protein Spea_2441 (Shewanella pealeana (strain ATCC 700345 / ANG-SQ1)).